We begin with the raw amino-acid sequence, 192 residues long: Ion-translocating oxidoreductase complex subunit B (192 aa).

The segment at 1–26 (MNTIWIAVAAISLLGLAFGAILGYAS) is hydrophobic. One can recognise a 4Fe-4S domain in the interval 32 to 91 (EDDPVVEKIDEILPQSQCGQCGYPGCRPYAEAISCNGEKINRCAPGGEAVMLKISELLNV). Positions 49, 52, 57, 74, 117, 120, 123, 127, 147, 150, 153, and 157 each coordinate [4Fe-4S] cluster. 2 4Fe-4S ferredoxin-type domains span residues 108 to 137 (VVAV…GATR) and 138 to 167 (AMHT…LQPV).

Belongs to the 4Fe4S bacterial-type ferredoxin family. RnfB subfamily. In terms of assembly, the complex is composed of six subunits: RsxA, RsxB, RsxC, RsxD, RsxE and RsxG. Requires [4Fe-4S] cluster as cofactor.

The protein localises to the cell inner membrane. Part of a membrane-bound complex that couples electron transfer with translocation of ions across the membrane. Required to maintain the reduced state of SoxR. This is Ion-translocating oxidoreductase complex subunit B from Escherichia fergusonii (strain ATCC 35469 / DSM 13698 / CCUG 18766 / IAM 14443 / JCM 21226 / LMG 7866 / NBRC 102419 / NCTC 12128 / CDC 0568-73).